Reading from the N-terminus, the 630-residue chain is Chaperone protein HtpG (630 aa).

Residues 1–338 (MTVEANKETL…SNDLSLNVSR (338 aa)) form an a; substrate-binding region. Residues 339-555 (EILQNDSTVE…QFDMGAQMKK (217 aa)) form a b region. The segment at 556-630 (IMEAAGQKVP…LNRLLLELAN (75 aa)) is c.

The protein belongs to the heat shock protein 90 family. As to quaternary structure, homodimer.

The protein resides in the cytoplasm. Functionally, molecular chaperone. Has ATPase activity. This Marinobacter nauticus (strain ATCC 700491 / DSM 11845 / VT8) (Marinobacter aquaeolei) protein is Chaperone protein HtpG.